The chain runs to 142 residues: Large ribosomal subunit protein uL13 (142 aa).

The protein belongs to the universal ribosomal protein uL13 family. In terms of assembly, part of the 50S ribosomal subunit.

This protein is one of the early assembly proteins of the 50S ribosomal subunit, although it is not seen to bind rRNA by itself. It is important during the early stages of 50S assembly. The sequence is that of Large ribosomal subunit protein uL13 from Idiomarina loihiensis (strain ATCC BAA-735 / DSM 15497 / L2-TR).